The following is a 411-amino-acid chain: Glutamate dehydrogenase (411 aa).

Lysine 102 is an active-site residue.

The protein belongs to the Glu/Leu/Phe/Val dehydrogenases family.

The catalysed reaction is L-glutamate + NAD(+) + H2O = 2-oxoglutarate + NH4(+) + NADH + H(+). It catalyses the reaction L-glutamate + NADP(+) + H2O = 2-oxoglutarate + NH4(+) + NADPH + H(+). The polypeptide is Glutamate dehydrogenase (GDH1) (Zea mays (Maize)).